Here is a 715-residue protein sequence, read N- to C-terminus: L-type lectin-domain containing receptor kinase VIII.1 (715 aa).

The signal sequence occupies residues 1-21; it reads MSLFLSFFISILLCFFNGATT. The legume-lectin like stretch occupies residues 22 to 247; the sequence is TQFDFSTLAI…IHSIEWWSFS (226 aa). Over 22-317 the chain is Extracellular; that stretch reads TQFDFSTLAI…SRFCKENPGT (296 aa). Residues N126 and N195 are each glycosylated (N-linked (GlcNAc...) asparagine). Residues 255–296 are disordered; it reads GSGSGSPPPRANLMNPKANSVKSPPPLASQPSSSAIPISSNT. Low complexity predominate over residues 283–296; that stretch reads SQPSSSAIPISSNT. The helical transmembrane segment at 318–338 threads the bilayer; that stretch reads IAGVVTAGAFFLALFAGALFW. Topologically, residues 339–715 are cytoplasmic; the sequence is VYSKKFKRVE…IIRSDDDHLV (377 aa). One can recognise a Protein kinase domain in the interval 376–676; the sequence is FNESRIIGHG…MSFSTSHLLL (301 aa). Residues 382–390 and K405 each bind ATP; that span reads IGHGAFGVV. The Proton acceptor role is filled by D500.

The protein in the C-terminal section; belongs to the protein kinase superfamily. Ser/Thr protein kinase family. It in the N-terminal section; belongs to the leguminous lectin family.

The protein resides in the cell membrane. The enzyme catalyses L-seryl-[protein] + ATP = O-phospho-L-seryl-[protein] + ADP + H(+). It catalyses the reaction L-threonyl-[protein] + ATP = O-phospho-L-threonyl-[protein] + ADP + H(+). The polypeptide is L-type lectin-domain containing receptor kinase VIII.1 (LECRK81) (Arabidopsis thaliana (Mouse-ear cress)).